Consider the following 168-residue polypeptide: UPF0134 protein MPN_524 (168 aa).

This sequence belongs to the UPF0134 family.

The chain is UPF0134 protein MPN_524 from Mycoplasma pneumoniae (strain ATCC 29342 / M129 / Subtype 1) (Mycoplasmoides pneumoniae).